The sequence spans 328 residues: Beta-ribofuranosylphenol 5'-phosphate synthase (328 aa).

It belongs to the beta-RFA-P synthase family. Homodimer. Requires Mg(2+) as cofactor.

The catalysed reaction is 5-phospho-alpha-D-ribose 1-diphosphate + 4-hydroxybenzoate + H(+) = 4-(beta-D-ribofuranosyl)phenol 5'-phosphate + CO2 + diphosphate. It carries out the reaction 4-aminobenzoate + 5-phospho-alpha-D-ribose 1-diphosphate + H(+) = 4-(beta-D-ribofuranosyl)aminobenzene 5'-phosphate + CO2 + diphosphate. It functions in the pathway cofactor biosynthesis; 5,6,7,8-tetrahydromethanopterin biosynthesis. Its function is as follows. Catalyzes the condensation of 4-hydroxybenzoate (HB) with 5-phospho-alpha-D-ribose 1-diphosphate (PRPP) to produce beta-ribofuranosylphenol 5'-phosphate (beta-RFH-P). Also catalyzes the condensation of 4-aminobenzoate (pABA) with PRPP to produce beta-ribofuranosylaminobenzene 5'-phosphate (beta-RFA-P). Only 4-hydroxybenzoate is known to be biosynthesized by methanogenic archaea, but 4-aminobenzoate can be used as substrate by growing methanogens when it is present in the growth medium. The protein is Beta-ribofuranosylphenol 5'-phosphate synthase of Methanocaldococcus jannaschii (strain ATCC 43067 / DSM 2661 / JAL-1 / JCM 10045 / NBRC 100440) (Methanococcus jannaschii).